A 319-amino-acid chain; its full sequence is Acetyl-coenzyme A carboxylase carboxyl transferase subunit alpha (319 aa).

The CoA carboxyltransferase C-terminal domain maps to 35–292 (EISKLMRRLV…KKTIAEALAE (258 aa)).

It belongs to the AccA family. As to quaternary structure, acetyl-CoA carboxylase is a heterohexamer composed of biotin carboxyl carrier protein (AccB), biotin carboxylase (AccC) and two subunits each of ACCase subunit alpha (AccA) and ACCase subunit beta (AccD).

The protein resides in the cytoplasm. It catalyses the reaction N(6)-carboxybiotinyl-L-lysyl-[protein] + acetyl-CoA = N(6)-biotinyl-L-lysyl-[protein] + malonyl-CoA. The protein operates within lipid metabolism; malonyl-CoA biosynthesis; malonyl-CoA from acetyl-CoA: step 1/1. Component of the acetyl coenzyme A carboxylase (ACC) complex. First, biotin carboxylase catalyzes the carboxylation of biotin on its carrier protein (BCCP) and then the CO(2) group is transferred by the carboxyltransferase to acetyl-CoA to form malonyl-CoA. This Desulfitobacterium hafniense (strain DSM 10664 / DCB-2) protein is Acetyl-coenzyme A carboxylase carboxyl transferase subunit alpha.